The chain runs to 319 residues: FAD-dependent oxidoreductase FVFD30 (319 aa).

FAD-binding residues include Arg6, Asp18, and Lys25. NAD(+)-binding residues include Lys129 and Gly188. Residues Lys129 and Gly188 each coordinate NADP(+). Asp228 and Tyr265 together coordinate FAD. Asp228 provides a ligand contact to 6-hydroxy-FAD. Tyr265 lines the NAD(+) pocket. An NADP(+)-binding site is contributed by Tyr265. A helical membrane pass occupies residues 281-301 (GVGYFGVWWGIVIGGWLASLL).

It belongs to the FAD-dependent oxidoreductase family.

Its subcellular location is the membrane. In terms of biological role, probable FAD-dependent oxidoreductase that plays a role in the regulation of fruiting body development. This is FAD-dependent oxidoreductase FVFD30 from Flammulina velutipes (Agaricus velutipes).